Here is a 201-residue protein sequence, read N- to C-terminus: uncharacterized protein (201 aa).

An N-terminal signal peptide occupies residues 1–19 (MKLIVSVFLIGCQFLNILG).

This is an uncharacterized protein from Acheta domesticus (House cricket).